The primary structure comprises 667 residues: 1-deoxy-D-xylulose-5-phosphate synthase (667 aa).

Thiamine diphosphate is bound by residues histidine 73 and 113 to 115 (SHA). Residue aspartate 145 coordinates Mg(2+). Thiamine diphosphate contacts are provided by residues 146–147 (GA), asparagine 175, tyrosine 297, and glutamate 379. Asparagine 175 is a Mg(2+) binding site.

The protein belongs to the transketolase family. DXPS subfamily. In terms of assembly, homodimer. The cofactor is Mg(2+). Thiamine diphosphate serves as cofactor.

The catalysed reaction is D-glyceraldehyde 3-phosphate + pyruvate + H(+) = 1-deoxy-D-xylulose 5-phosphate + CO2. Its pathway is metabolic intermediate biosynthesis; 1-deoxy-D-xylulose 5-phosphate biosynthesis; 1-deoxy-D-xylulose 5-phosphate from D-glyceraldehyde 3-phosphate and pyruvate: step 1/1. Functionally, catalyzes the acyloin condensation reaction between C atoms 2 and 3 of pyruvate and glyceraldehyde 3-phosphate to yield 1-deoxy-D-xylulose-5-phosphate (DXP). The sequence is that of 1-deoxy-D-xylulose-5-phosphate synthase from Kocuria rhizophila (strain ATCC 9341 / DSM 348 / NBRC 103217 / DC2201).